Here is a 100-residue protein sequence, read N- to C-terminus: UPF0213 protein FN1575 (100 aa).

Residues 1–77 (MAYYLYMLRC…KYIKKKKENI (77 aa)) form the GIY-YIG domain.

This sequence belongs to the UPF0213 family.

The protein is UPF0213 protein FN1575 of Fusobacterium nucleatum subsp. nucleatum (strain ATCC 25586 / DSM 15643 / BCRC 10681 / CIP 101130 / JCM 8532 / KCTC 2640 / LMG 13131 / VPI 4355).